We begin with the raw amino-acid sequence, 356 residues long: uncharacterized protein (356 aa).

3 helical membrane-spanning segments follow: residues 258–275 (SALQ…VFYY), 290–312 (PHWL…TEAL), and 325–347 (LVLL…TLFS).

The protein resides in the cell membrane. This is an uncharacterized protein from Archaeoglobus fulgidus (strain ATCC 49558 / DSM 4304 / JCM 9628 / NBRC 100126 / VC-16).